We begin with the raw amino-acid sequence, 377 residues long: Putative F-box protein At1g70380 (377 aa).

The F-box domain maps to 3–48 (NTSFETLALDMQIEILARLPLKYLMRCMCVSKKWASLIRGEDFRSA).

The polypeptide is Putative F-box protein At1g70380 (Arabidopsis thaliana (Mouse-ear cress)).